We begin with the raw amino-acid sequence, 404 residues long: uncharacterized protein (404 aa).

6 consecutive transmembrane segments (helical) span residues 37–57, 92–112, 122–142, 188–208, 230–250, and 272–292; these read LLIL…FVQF, IYNV…FVLG, LLTL…SYIP, MFYA…ILII, IGGI…TIGT, and AFFL…LGIF.

The protein localises to the cell membrane. This is an uncharacterized protein from Mycoplasma pneumoniae (strain ATCC 29342 / M129 / Subtype 1) (Mycoplasmoides pneumoniae).